The sequence spans 639 residues: tRNA (uracil(54)-C(5))-methyltransferase (639 aa).

Residues 78–113 are disordered; the sequence is VPPTMKHTVDNKRLSSPLTDSGNRRTKKPKLRKYKA. Phosphoserine occurs at positions 92 and 93. Basic residues predominate over residues 101–113; sequence RRTKKPKLRKYKA. Residues 163–228 form the TRAM domain; that stretch reads LQYHREVKNV…PYYVESDLLD (66 aa). S-adenosyl-L-methionine contacts are provided by Gln-461, Tyr-496, Glu-517, and Asp-564. The Nucleophile role is filled by Cys-591. The Proton acceptor role is filled by Glu-631.

The protein belongs to the class I-like SAM-binding methyltransferase superfamily. RNA M5U methyltransferase family.

It carries out the reaction uridine(54) in tRNA + S-adenosyl-L-methionine = 5-methyluridine(54) in tRNA + S-adenosyl-L-homocysteine + H(+). In terms of biological role, catalyzes the formation of 5-methyl-uridine at position 54 (m5U54) in all tRNA. May also have a role in tRNA stabilization or maturation. The polypeptide is tRNA (uracil(54)-C(5))-methyltransferase (TRM2) (Saccharomyces cerevisiae (strain ATCC 204508 / S288c) (Baker's yeast)).